A 309-amino-acid polypeptide reads, in one-letter code: Lactamase-like protein aptB (309 aa).

The Zn(2+) site is built by His97, His99, Asp101, and His102. Catalysis depends on Asp101, which acts as the Proton donor/acceptor.

This sequence belongs to the metallo-beta-lactamase superfamily. Zn(2+) is required as a cofactor.

It carries out the reaction 2,3,6,8,9-pentahydroxy-1-oxo-3-(2-oxopropyl)-1,2,3,4-tetrahydroanthracene-2-carboxyl-[ACP] + H2O = 2,3,6,8,9-pentahydroxy-1-oxo-3-(2-oxopropyl)-1,2,3,4-tetrahydroanthracene-2-carboxylate + holo-[ACP] + H(+). It functions in the pathway secondary metabolite biosynthesis. In terms of biological role, lactamase-like protein; part of the gene cluster that mediates the biosynthesis of asperthecin, an anthraquinone pigment. Polyketide synthase (PKS) aptA catalyzes the formation of the aromatic polyketide from acetyl coenzyme A and seven malonyl coenzyme A molecules. Polyketide is subsequently hydrolyzed by the action of aptB into endocrocin-9-anthrone. Endocrocin-9-anthrone is then oxidized into endocrocin by aptC. Endocrocin is likely to decarboxylate spontaneously to form emodin which explains why there is no decarboxylase in the asperthecin biosynthesis cluster. Finally, aptC or another endogenous oxygenase catalyzes additional oxidation steps to form asperthecin. This Emericella nidulans (strain FGSC A4 / ATCC 38163 / CBS 112.46 / NRRL 194 / M139) (Aspergillus nidulans) protein is Lactamase-like protein aptB.